The sequence spans 88 residues: Alpha-latrotoxin associated low molecular weight protein 2 (88 aa).

An N-terminal signal peptide occupies residues 1–19; that stretch reads MLKLICIAFLVTVLTLVAG. 3 disulfides stabilise this stretch: Cys-30–Cys-66, Cys-46–Cys-62, and Cys-49–Cys-75.

It belongs to the arthropod CHH/MIH/GIH/VIH hormone family. As to expression, expressed by the venom gland.

The protein localises to the secreted. In terms of biological role, may increase the toxicity of alpha-latrotoxin and/or other venom components. Is non-toxic to mice and to the cockroach Periplaneta americana. This Latrodectus hesperus (Western black widow spider) protein is Alpha-latrotoxin associated low molecular weight protein 2.